The following is a 125-amino-acid chain: Succinate dehydrogenase assembly factor 3, mitochondrial (125 aa).

The N-terminal 42 residues, 1–42 (MRTTNHLYRTVHRQGKPLLPPLHLYRRILRAHRTFPPAQRAL), are a transit peptide targeting the mitochondrion.

The protein belongs to the complex I LYR family. SDHAF3 subfamily. Interacts with the iron-sulfur protein subunit within the SDH catalytic dimer.

It localises to the mitochondrion matrix. In terms of biological role, plays an essential role in the assembly of succinate dehydrogenase (SDH), an enzyme complex (also referred to as respiratory complex II) that is a component of both the tricarboxylic acid (TCA) cycle and the mitochondrial electron transport chain, and which couples the oxidation of succinate to fumarate with the reduction of ubiquinone (coenzyme Q) to ubiquinol. Promotes maturation of the iron-sulfur protein subunit of the SDH catalytic dimer, protecting it from the deleterious effects of oxidants. May act together with SDHAF1. This Eremothecium gossypii (strain ATCC 10895 / CBS 109.51 / FGSC 9923 / NRRL Y-1056) (Yeast) protein is Succinate dehydrogenase assembly factor 3, mitochondrial.